The chain runs to 243 residues: Venom nerve growth factor 2 (243 aa).

The first 18 residues, 1 to 18, serve as a signal peptide directing secretion; sequence MSMLCYTLIIAFLIGIWA. A propeptide spanning residues 19–125 is cleaved from the precursor; it reads APKSEDNVPL…TLNRNIRAKR (107 aa). Residues 47–66 are compositionally biased toward basic and acidic residues; the sequence is GLKTSRNTDQRHPAPKKAED. The interval 47 to 67 is disordered; that stretch reads GLKTSRNTDQRHPAPKKAEDQ. Disulfide bonds link Cys-139–Cys-204 and Cys-192–Cys-234. Asn-148 carries N-linked (GlcNAc...) asparagine glycosylation.

Belongs to the NGF-beta family. Homodimer; non-covalently linked. Expressed by the venom gland.

The protein resides in the secreted. Functionally, nerve growth factor is important for the development and maintenance of the sympathetic and sensory nervous systems. It stimulates division and differentiation of sympathetic and embryonic sensory neurons as well as basal forebrain cholinergic neurons in the brain. Its relevance in the snake venom is not clear. However, it has been shown to inhibit metalloproteinase-dependent proteolysis of platelet glycoprotein Ib alpha, suggesting a metalloproteinase inhibition to prevent metalloprotease autodigestion and/or protection against prey proteases. Binds a lipid between the two protein chains in the homodimer. The lipid-bound form promotes histamine relase from mouse mast cells, contrary to the lipid-free form. The protein is Venom nerve growth factor 2 of Pseudonaja textilis (Eastern brown snake).